Here is a 427-residue protein sequence, read N- to C-terminus: CCA-adding enzyme (427 aa).

Residues Ser50 and Lys53 each coordinate ATP. Residues Ser50 and Lys53 each contribute to the CTP site. Residues Asp61, Asp63, and Asp112 each contribute to the Mg(2+) site. Positions 135, 155, and 164 each coordinate ATP. The CTP site is built by His135, Lys155, and Tyr164.

The protein belongs to the tRNA nucleotidyltransferase/poly(A) polymerase family. Archaeal CCA-adding enzyme subfamily. As to quaternary structure, homodimer. The cofactor is Mg(2+).

It catalyses the reaction a tRNA precursor + 2 CTP + ATP = a tRNA with a 3' CCA end + 3 diphosphate. The enzyme catalyses a tRNA with a 3' CCA end + 2 CTP + ATP = a tRNA with a 3' CCACCA end + 3 diphosphate. Catalyzes the addition and repair of the essential 3'-terminal CCA sequence in tRNAs without using a nucleic acid template. Adds these three nucleotides in the order of C, C, and A to the tRNA nucleotide-73, using CTP and ATP as substrates and producing inorganic pyrophosphate. tRNA 3'-terminal CCA addition is required both for tRNA processing and repair. Also involved in tRNA surveillance by mediating tandem CCA addition to generate a CCACCA at the 3' terminus of unstable tRNAs. While stable tRNAs receive only 3'-terminal CCA, unstable tRNAs are marked with CCACCA and rapidly degraded. This Picrophilus torridus (strain ATCC 700027 / DSM 9790 / JCM 10055 / NBRC 100828 / KAW 2/3) protein is CCA-adding enzyme.